An 806-amino-acid chain; its full sequence is Ankyrin repeat, bromo and BTB domain-containing protein DDB_G0293800 (806 aa).

ANK repeat units lie at residues M1–Q30, S34–C63, R67–C96, A100–L130, and E134–V163. Basic and acidic residues predominate over residues G210–S228. A disordered region spans residues G210–Q231. Residues S239 to E307 form the BTB domain. 2 disordered regions span residues T423–M517 and Q621–R743. Composition is skewed to low complexity over residues A426–S436 and T443–S511. Residues S516 to N622 form the Bromo domain. A compositionally biased stretch (pro residues) spans E626 to I641. A compositionally biased stretch (low complexity) spans P642–T658. Basic and acidic residues predominate over residues D666 to T675. Positions N676–A693 are enriched in polar residues. Low complexity predominate over residues S694–T733. Residues S727 to E806 enclose the NET domain.

In Dictyostelium discoideum (Social amoeba), this protein is Ankyrin repeat, bromo and BTB domain-containing protein DDB_G0293800.